A 211-amino-acid polypeptide reads, in one-letter code: N-(5'-phosphoribosyl)anthranilate isomerase (211 aa).

It belongs to the TrpF family.

The enzyme catalyses N-(5-phospho-beta-D-ribosyl)anthranilate = 1-(2-carboxyphenylamino)-1-deoxy-D-ribulose 5-phosphate. It functions in the pathway amino-acid biosynthesis; L-tryptophan biosynthesis; L-tryptophan from chorismate: step 3/5. The protein is N-(5'-phosphoribosyl)anthranilate isomerase of Methanococcus maripaludis (strain DSM 14266 / JCM 13030 / NBRC 101832 / S2 / LL).